The following is a 556-amino-acid chain: Glutamine--tRNA ligase (556 aa).

Positions 35-45 match the 'HIGH' region motif; sequence PEPNGYLHIGH. ATP is bound by residues 36 to 38 and 42 to 48; these read EPN and HIGHAKS. Positions 68 and 213 each coordinate L-glutamine. Residues threonine 232 and 262 to 263 contribute to the ATP site; that span reads RL. The 'KMSKS' region signature appears at 269–273; sequence VTSKR.

The protein belongs to the class-I aminoacyl-tRNA synthetase family. Monomer.

It localises to the cytoplasm. It carries out the reaction tRNA(Gln) + L-glutamine + ATP = L-glutaminyl-tRNA(Gln) + AMP + diphosphate. The chain is Glutamine--tRNA ligase from Pseudomonas aeruginosa (strain LESB58).